The chain runs to 240 residues: Sugar fermentation stimulation protein homolog (240 aa).

Belongs to the SfsA family.

The sequence is that of Sugar fermentation stimulation protein homolog from Saccharolobus islandicus (strain L.S.2.15 / Lassen #1) (Sulfolobus islandicus).